The primary structure comprises 448 residues: Exodeoxyribonuclease 7 large subunit (448 aa).

It belongs to the XseA family. As to quaternary structure, heterooligomer composed of large and small subunits.

Its subcellular location is the cytoplasm. The enzyme catalyses Exonucleolytic cleavage in either 5'- to 3'- or 3'- to 5'-direction to yield nucleoside 5'-phosphates.. Functionally, bidirectionally degrades single-stranded DNA into large acid-insoluble oligonucleotides, which are then degraded further into small acid-soluble oligonucleotides. The sequence is that of Exodeoxyribonuclease 7 large subunit from Alcanivorax borkumensis (strain ATCC 700651 / DSM 11573 / NCIMB 13689 / SK2).